Here is a 196-residue protein sequence, read N- to C-terminus: Vascular-related unknown protein 2 (196 aa).

A disordered region spans residues 84–130 (ANNINTNPKKRRIIHQHKEEEEEELQKGEEEEEDEEDTASSPSNKTK). Acidic residues predominate over residues 103-121 (EEEEELQKGEEEEEDEEDT).

Functionally, involved in the regulation of plant growth. In Arabidopsis thaliana (Mouse-ear cress), this protein is Vascular-related unknown protein 2.